We begin with the raw amino-acid sequence, 270 residues long: 3-methyl-2-oxobutanoate hydroxymethyltransferase (270 aa).

Residues D43 and D82 each contribute to the Mg(2+) site. Residues 43-44, D82, and K112 contribute to the 3-methyl-2-oxobutanoate site; that span reads DS. E114 contributes to the Mg(2+) binding site. E179 (proton acceptor) is an active-site residue.

This sequence belongs to the PanB family. As to quaternary structure, homodecamer; pentamer of dimers. Mg(2+) is required as a cofactor.

The protein resides in the cytoplasm. It catalyses the reaction 3-methyl-2-oxobutanoate + (6R)-5,10-methylene-5,6,7,8-tetrahydrofolate + H2O = 2-dehydropantoate + (6S)-5,6,7,8-tetrahydrofolate. Its pathway is cofactor biosynthesis; (R)-pantothenate biosynthesis; (R)-pantoate from 3-methyl-2-oxobutanoate: step 1/2. Functionally, catalyzes the reversible reaction in which hydroxymethyl group from 5,10-methylenetetrahydrofolate is transferred onto alpha-ketoisovalerate to form ketopantoate. The polypeptide is 3-methyl-2-oxobutanoate hydroxymethyltransferase (Staphylococcus saprophyticus subsp. saprophyticus (strain ATCC 15305 / DSM 20229 / NCIMB 8711 / NCTC 7292 / S-41)).